We begin with the raw amino-acid sequence, 269 residues long: Tryptophan synthase alpha chain (269 aa).

Catalysis depends on proton acceptor residues Glu50 and Asp61.

Belongs to the TrpA family. In terms of assembly, tetramer of two alpha and two beta chains.

It catalyses the reaction (1S,2R)-1-C-(indol-3-yl)glycerol 3-phosphate + L-serine = D-glyceraldehyde 3-phosphate + L-tryptophan + H2O. The protein operates within amino-acid biosynthesis; L-tryptophan biosynthesis; L-tryptophan from chorismate: step 5/5. The alpha subunit is responsible for the aldol cleavage of indoleglycerol phosphate to indole and glyceraldehyde 3-phosphate. In Francisella tularensis subsp. holarctica (strain FTNF002-00 / FTA), this protein is Tryptophan synthase alpha chain.